The following is a 117-amino-acid chain: Fluoride-specific ion channel FluC 2 (117 aa).

The next 2 membrane-spanning stretches (helical) occupy residues 1 to 21 and 46 to 66; these read MISI…RSAI and FLIG…AFFV. Na(+)-binding residues include glycine 71 and threonine 74. The helical transmembrane segment at 95-115 threads the bilayer; the sequence is LFLNYSLLQFIIGFIACYIGY.

The protein belongs to the fluoride channel Fluc/FEX (TC 1.A.43) family.

It localises to the cell membrane. It catalyses the reaction fluoride(in) = fluoride(out). Na(+) is not transported, but it plays an essential structural role and its presence is essential for fluoride channel function. In terms of biological role, fluoride-specific ion channel. Important for reducing fluoride concentration in the cell, thus reducing its toxicity. The chain is Fluoride-specific ion channel FluC 2 from Staphylococcus aureus (strain MSSA476).